Here is a 512-residue protein sequence, read N- to C-terminus: 2,3-bisphosphoglycerate-independent phosphoglycerate mutase (512 aa).

Mn(2+) is bound by residues aspartate 11 and serine 61. The Phosphoserine intermediate role is filled by serine 61. Residues histidine 122, 152–153 (RD), arginine 184, arginine 190, 259–262 (RADR), and lysine 332 each bind substrate. 5 residues coordinate Mn(2+): aspartate 399, histidine 403, aspartate 440, histidine 441, and histidine 459.

Belongs to the BPG-independent phosphoglycerate mutase family. As to quaternary structure, monomer. Mn(2+) is required as a cofactor.

The enzyme catalyses (2R)-2-phosphoglycerate = (2R)-3-phosphoglycerate. It functions in the pathway carbohydrate degradation; glycolysis; pyruvate from D-glyceraldehyde 3-phosphate: step 3/5. Functionally, catalyzes the interconversion of 2-phosphoglycerate and 3-phosphoglycerate. The chain is 2,3-bisphosphoglycerate-independent phosphoglycerate mutase from Francisella tularensis subsp. tularensis (strain FSC 198).